Reading from the N-terminus, the 231-residue chain is Sugar fermentation stimulation protein homolog (231 aa).

This sequence belongs to the SfsA family.

The chain is Sugar fermentation stimulation protein homolog from Geobacter sp. (strain M21).